The chain runs to 405 residues: Tryptophan synthase beta chain (405 aa).

Residue Lys98 is modified to N6-(pyridoxal phosphate)lysine.

This sequence belongs to the TrpB family. Tetramer of two alpha and two beta chains. Pyridoxal 5'-phosphate is required as a cofactor.

The catalysed reaction is (1S,2R)-1-C-(indol-3-yl)glycerol 3-phosphate + L-serine = D-glyceraldehyde 3-phosphate + L-tryptophan + H2O. It functions in the pathway amino-acid biosynthesis; L-tryptophan biosynthesis; L-tryptophan from chorismate: step 5/5. In terms of biological role, the beta subunit is responsible for the synthesis of L-tryptophan from indole and L-serine. The sequence is that of Tryptophan synthase beta chain from Xanthomonas euvesicatoria pv. vesicatoria (strain 85-10) (Xanthomonas campestris pv. vesicatoria).